The chain runs to 527 residues: Nucleobase-ascorbate transporter LPE1 (527 aa).

The next 12 helical transmembrane spans lie at 43–63 (LVML…MGGG), 68–88 (AIVI…QVHF), 92–112 (LPAV…IILS), 132–152 (LQGA…FGIW), 163–183 (AAVP…FPGV), 189–209 (VGLP…HLFA), 219–239 (AVLV…AAGA), 284–304 (FAML…LIAV), 361–383 (VIKI…AVLA), 387–409 (LPIF…FSLL), 427–447 (LFLG…FGFG), and 458–478 (VMVN…AYLL).

This sequence belongs to the nucleobase:cation symporter-2 (NCS2) (TC 2.A.40) family. Highly expressed in roots.

The protein localises to the membrane. Inhibited by excess of xanthin, uric acid and ascorbic acid, and by 100 um N,N-dicyclohexylcarbodiimide and 30 um carbonyl cyanide m-chlorophenyl-hydrazone. High affinity uric acid-xanthine transporter in A.nidulans. Binds, but cannot transport ascorbic acid. In Zea mays (Maize), this protein is Nucleobase-ascorbate transporter LPE1 (LPE1).